A 139-amino-acid polypeptide reads, in one-letter code: Galactoside-binding soluble lectin 13 (139 aa).

The region spanning 6 to 138 (VPYKLPVSLS…DISLTSVCVC (133 aa)) is the Galectin domain.

In terms of assembly, homodimer; disulfide-linked. In terms of tissue distribution, detected in adult and fetal spleen, fetal kidney, adult urinary bladder and placenta. Placental expression originates predominantly from the syncytiotrophoblast.

Its subcellular location is the cytoplasm. It is found in the nucleus matrix. In terms of biological role, binds beta-galactoside and lactose. Strong inducer of T-cell apoptosis. Has hemagglutinating activity towards chicken erythrocytes. This is Galactoside-binding soluble lectin 13 (LGALS13) from Homo sapiens (Human).